Reading from the N-terminus, the 201-residue chain is Ras-related protein Rab-9A (201 aa).

A2 bears the N-acetylalanine mark. GDP is bound at residue G17. The GTP site is built by G17, V18, G19, K20, S21, S22, T34, H38, and T39. GDP-binding residues include G19, K20, S21, and S22. A Mg(2+)-binding site is contributed by S21. The short motif at 31-42 (KFDTQLFHTIGV) is the Switch 1 element. 2 residues coordinate Mg(2+): T39 and D62. A Switch 2 motif is present at residues 64 to 78 (AGQERFRSLRTPFYR). Residues G65, N124, K125, D127, A155, and K156 each contribute to the GTP site. Residues N124, K125, D127, A155, and K156 each coordinate GDP. S179 is modified (phosphoserine). T187 is modified (phosphothreonine). Residues C200 and C201 are each lipidated (S-geranylgeranyl cysteine).

It belongs to the small GTPase superfamily. Rab family. As to quaternary structure, interacts (preferentially in its GTP-bound form) with GCC2 (via its GRIP domain). Interacts (GTP-bound form) with SGSM1; the GDP-bound form has much lower affinity for SGSM1. Interacts with SGSM2. The GTP-bound form but not the GDP-bound form interacts with HPS4 and BLOC-3 complex (heterodimer of HPS1 and HPS4) but does not interact with HPS1 alone. Interacts (GTP-bound form) with NDE1; two RAB9A-GTP molecules lie on the opposite sides of the NDE1 homodimer; the interaction leads to RAB9A-dynein motor tethering. Interacts (GTP-bound form) with NDEL1. Mg(2+) serves as cofactor.

Its subcellular location is the cell membrane. The protein localises to the endoplasmic reticulum membrane. It localises to the golgi apparatus membrane. The protein resides in the late endosome. It is found in the cytoplasmic vesicle. Its subcellular location is the phagosome membrane. The protein localises to the phagosome. It localises to the cytoplasmic vesicle membrane. The protein resides in the melanosome. The enzyme catalyses GTP + H2O = GDP + phosphate + H(+). With respect to regulation, regulated by guanine nucleotide exchange factors (GEFs) which promote the exchange of bound GDP for free GTP. Regulated by GTPase activating proteins (GAPs) which increase the GTP hydrolysis activity. Inhibited by GDP dissociation inhibitors (GDIs). Functionally, the small GTPases Rab are key regulators of intracellular membrane trafficking, from the formation of transport vesicles to their fusion with membranes. Rabs cycle between an inactive GDP-bound form and an active GTP-bound form that is able to recruit to membranes different sets of downstream effectors directly responsible for vesicle formation, movement, tethering and fusion. RAB9A is involved in the transport of proteins between the endosomes and the trans-Golgi network (TGN). Specifically uses NDE1/NDEL1 as an effector to interact with the dynein motor complex in order to control retrograde trafficking of RAB9-associated late endosomes to the TGN. Involved in the recruitment of SGSM2 to melanosomes and is required for the proper trafficking of melanogenic enzymes TYR, TYRP1 and DCT/TYRP2 to melanosomes in melanocytes. The chain is Ras-related protein Rab-9A from Homo sapiens (Human).